Reading from the N-terminus, the 211-residue chain is Prolactin-3C1 (211 aa).

The signal sequence occupies residues 1-29; the sequence is MQLSLTQARTWKGLLLLVSCMILWISVTP. N77 and N173 each carry an N-linked (GlcNAc...) asparagine glycan. C80 and C187 are joined by a disulfide.

This sequence belongs to the somatotropin/prolactin family. Expressed exclusively in decidual tissue.

The protein localises to the secreted. The chain is Prolactin-3C1 (Prl3c1) from Rattus norvegicus (Rat).